The primary structure comprises 101 residues: Small ribosomal subunit protein uS14 (101 aa).

It belongs to the universal ribosomal protein uS14 family. In terms of assembly, part of the 30S ribosomal subunit. Contacts proteins S3 and S10.

Binds 16S rRNA, required for the assembly of 30S particles and may also be responsible for determining the conformation of the 16S rRNA at the A site. The protein is Small ribosomal subunit protein uS14 of Opitutus terrae (strain DSM 11246 / JCM 15787 / PB90-1).